The following is a 250-amino-acid chain: MTEKTASHYWNEETSILKLRRKDILLFEIYATTLLLGSIYSIYVDKWSITSYFGNSKNLINLIFVKRGWFWTSLVYFYHAWDQKRNKIDFKFISRYIVATLWWMFVTQWFIGPGLIDRTFALSGGSCKNFDGDSSVFIPLTASTCKGLNGSWSGGHDLSGHVFLLTHSSLFMLSENFSFILNNGIKATSTKVLFGLLGLWWWMLFVTASFYHTTFEKCTGFFSGILEWSIVYVFSSRMPAVADLLGSSDY.

Topologically, residues methionine 1–aspartate 23 are cytoplasmic. A helical membrane pass occupies residues isoleucine 24 to valine 44. Residues aspartate 45–asparagine 58 are Lumenal-facing. Residues leucine 59–histidine 79 form a helical membrane-spanning segment. At alanine 80–arginine 95 the chain is on the cytoplasmic side. A helical membrane pass occupies residues tyrosine 96–isoleucine 116. The Lumenal portion of the chain corresponds to aspartate 117 to glycine 160. Asparagine 149 carries N-linked (GlcNAc...) asparagine glycosylation. Histidine 161 is an active-site residue. The chain crosses the membrane as a helical span at residues histidine 161–leucine 181. Residues asparagine 182 to lysine 191 are Cytoplasmic-facing. The helical transmembrane segment at valine 192–histidine 212 threads the bilayer. Histidine 212 is an active-site residue. A topological domain (lumenal) is located at residue threonine 213. The chain crosses the membrane as a helical span at residues threonine 214–phenylalanine 234. At serine 235–tyrosine 250 the chain is on the cytoplasmic side.

This sequence belongs to the FIT family. Fungal FIT2B/SCS3 subfamily.

The protein resides in the endoplasmic reticulum membrane. It catalyses the reaction an acyl-CoA + H2O = an acyl-4'-phosphopantetheine + adenosine 3',5'-bisphosphate + 2 H(+). The enzyme catalyses (9Z)-octadecenoyl-CoA + H2O = S-(9Z-octadecenoyl)-4'-phosphopantetheine + adenosine 3',5'-bisphosphate + 2 H(+). The catalysed reaction is (5Z,8Z,11Z,14Z)-eicosatetraenoyl-CoA + H2O = S-(5Z,8Z,11Z,14Z-eicosatetraenoyl)-4'-phosphopantetheine + adenosine 3',5'-bisphosphate + 2 H(+). It carries out the reaction hexadecanoyl-CoA + H2O = S-hexadecanoyl-4'-phosphopantetheine + adenosine 3',5'-bisphosphate + 2 H(+). Its function is as follows. Fatty acyl-coenzyme A (CoA) diphosphatase that hydrolyzes fatty acyl-CoA to yield acyl-4'-phosphopantetheine and adenosine 3',5'-bisphosphate. Preferentially hydrolyzes unsaturated long-chain acyl-CoA substrates in the endoplasmic reticulum (ER) lumen. This catalytic activity is required for maintaining ER structure and for lipid droplets (LDs) biogenesis, which are lipid storage organelles involved in maintaining lipid and energy homeostasis. May directly bind to diacylglycerol (DAGs) and triacylglycerol, which is also important for LD biogenesis. May support directional budding of nacent LDs from the ER into the cytosol by reducing DAG levels at sites of LD formation. May play a role in the regulation of cell morphology and cytoskeletal organization. This chain is Acyl-coenzyme A diphosphatase fit1, found in Schizosaccharomyces pombe (strain 972 / ATCC 24843) (Fission yeast).